Reading from the N-terminus, the 329-residue chain is GTP 3',8-cyclase (329 aa).

In terms of domain architecture, Radical SAM core spans 8 to 234 (AFARKFYYLR…QLRQRSDGPA (227 aa)). Residue R17 participates in GTP binding. Positions 24 and 28 each coordinate [4Fe-4S] cluster. Y30 lines the S-adenosyl-L-methionine pocket. C31 serves as a coordination point for [4Fe-4S] cluster. Residue R68 coordinates GTP. Residue G72 coordinates S-adenosyl-L-methionine. T99 is a GTP binding site. S123 is a binding site for S-adenosyl-L-methionine. K160 lines the GTP pocket. M194 is an S-adenosyl-L-methionine binding site. Positions 257 and 260 each coordinate [4Fe-4S] cluster. 262–264 (RLR) contacts GTP. C274 contacts [4Fe-4S] cluster.

Belongs to the radical SAM superfamily. MoaA family. As to quaternary structure, monomer and homodimer. [4Fe-4S] cluster is required as a cofactor.

It carries out the reaction GTP + AH2 + S-adenosyl-L-methionine = (8S)-3',8-cyclo-7,8-dihydroguanosine 5'-triphosphate + 5'-deoxyadenosine + L-methionine + A + H(+). Its pathway is cofactor biosynthesis; molybdopterin biosynthesis. Its function is as follows. Catalyzes the cyclization of GTP to (8S)-3',8-cyclo-7,8-dihydroguanosine 5'-triphosphate. This is GTP 3',8-cyclase from Salmonella heidelberg (strain SL476).